The sequence spans 122 residues: uncharacterized protein (122 aa).

This is an uncharacterized protein from Bacillus subtilis (strain 168).